Reading from the N-terminus, the 124-residue chain is Fluoride-specific ion channel FluC (124 aa).

4 helical membrane passes run 4–24 (YLVI…TGVY), 36–56 (GTLI…ILFL), 63–83 (PLWR…LSSI), and 100–120 (LLNI…GIVL). The Na(+) site is built by glycine 75 and threonine 78.

This sequence belongs to the fluoride channel Fluc/FEX (TC 1.A.43) family.

Its subcellular location is the cell inner membrane. It catalyses the reaction fluoride(in) = fluoride(out). Its activity is regulated as follows. Na(+) is not transported, but it plays an essential structural role and its presence is essential for fluoride channel function. In terms of biological role, fluoride-specific ion channel. Important for reducing fluoride concentration in the cell, thus reducing its toxicity. This is Fluoride-specific ion channel FluC from Sulfurihydrogenibium sp. (strain YO3AOP1).